Reading from the N-terminus, the 252-residue chain is 3-dehydroquinate dehydratase (252 aa).

Residues Ser-21, 46-48 (EWR), and Arg-82 each bind 3-dehydroquinate. His-143 serves as the catalytic Proton donor/acceptor. Lys-170 (schiff-base intermediate with substrate) is an active-site residue. 3-dehydroquinate-binding residues include Arg-213, Ser-232, and Gln-236.

This sequence belongs to the type-I 3-dehydroquinase family. Homodimer.

It catalyses the reaction 3-dehydroquinate = 3-dehydroshikimate + H2O. It participates in metabolic intermediate biosynthesis; chorismate biosynthesis; chorismate from D-erythrose 4-phosphate and phosphoenolpyruvate: step 3/7. Involved in the third step of the chorismate pathway, which leads to the biosynthesis of aromatic amino acids. Catalyzes the cis-dehydration of 3-dehydroquinate (DHQ) and introduces the first double bond of the aromatic ring to yield 3-dehydroshikimate. The protein is 3-dehydroquinate dehydratase of Escherichia coli O9:H4 (strain HS).